We begin with the raw amino-acid sequence, 424 residues long: Serine/threonine-protein kinase H1 (424 aa).

G2 carries the N-myristoyl glycine lipid modification. C3 carries S-palmitoyl cysteine lipidation. The disordered stretch occupies residues 56 to 80 (SQYAHPCPGPPTAGHTEPPSEPPRR). The 258-residue stretch at 98-355 (YDIKALIGRG…ALQALRHPWV (258 aa)) folds into the Protein kinase domain. ATP contacts are provided by residues 104–112 (IGRGSFSRV) and K127. D218 functions as the Proton acceptor in the catalytic mechanism. The tract at residues 378-407 (RASSRCQSTKSAQSTRSSRSTRSNKSRRVR) is disordered. Phosphoserine; by autocatalysis is present on residues S380 and S381. Positions 385–398 (STKSAQSTRSSRST) are enriched in low complexity.

It belongs to the protein kinase superfamily. CAMK Ser/Thr protein kinase family. As to quaternary structure, homodimer. Post-translationally, autophosphorylated on serine residues. In terms of processing, myristoylated. Required for membrane association. Prerequisite for palmitoylation to occur. Palmitoylated. Expressed in all tissues and cell lines tested with the highest level of abundance in testis.

It is found in the golgi apparatus. The protein localises to the cytoplasm. The protein resides in the cytoskeleton. Its subcellular location is the microtubule organizing center. It localises to the centrosome. It is found in the nucleus speckle. The protein localises to the endoplasmic reticulum membrane. The protein resides in the cell membrane. The enzyme catalyses L-seryl-[protein] + ATP = O-phospho-L-seryl-[protein] + ADP + H(+). The catalysed reaction is L-threonyl-[protein] + ATP = O-phospho-L-threonyl-[protein] + ADP + H(+). Activity depends on Ca(2+) concentration. In terms of biological role, serine/threonine protein kinase that may be involved in the regulation of pre-mRNA processing. It may phosphorylate components of nuclear splice factor compartments (SFC), such as non-snRNP splicing factors containing a serine/arginine-rich domain (SR proteins). Reversible phosphorylation of SR proteins may cause their release into the nucleoplasm and change their local concentration, thereby influencing alternative splicing. The polypeptide is Serine/threonine-protein kinase H1 (PSKH1) (Homo sapiens (Human)).